We begin with the raw amino-acid sequence, 354 residues long: Squamosa promoter-binding-like protein 15 (354 aa).

Residues 1 to 25 (MELLMCSGQAESGGSSSTESSSLSG) are disordered. Residues 7-25 (SGQAESGGSSSTESSSLSG) show a composition bias toward low complexity. The SBP-type zinc finger occupies 56-133 (TARCQVEGCR…ACHNERRRKP (78 aa)). 8 residues coordinate Zn(2+): Cys59, Cys64, Cys81, His84, Cys100, Cys103, His107, and Cys119. Residues 116–132 (KRSCRRRLACHNERRRK) carry the Bipartite nuclear localization signal motif.

Requires Zn(2+) as cofactor.

The protein resides in the nucleus. Functionally, trans-acting factor that binds specifically to the consensus nucleotide sequence 5'-TNCGTACAA-3'. This Arabidopsis thaliana (Mouse-ear cress) protein is Squamosa promoter-binding-like protein 15 (SPL15).